The primary structure comprises 177 residues: NADH-quinone oxidoreductase subunit E (177 aa).

Positions 93, 98, 134, and 138 each coordinate [2Fe-2S] cluster.

It belongs to the complex I 24 kDa subunit family. It depends on [2Fe-2S] cluster as a cofactor.

The catalysed reaction is a quinone + NADH + 5 H(+)(in) = a quinol + NAD(+) + 4 H(+)(out). Functionally, NDH-1 shuttles electrons from NADH, via FMN and iron-sulfur (Fe-S) centers, to quinones in the respiratory chain. Couples the redox reaction to proton translocation (for every two electrons transferred, four hydrogen ions are translocated across the cytoplasmic membrane), and thus conserves the redox energy in a proton gradient. This chain is NADH-quinone oxidoreductase subunit E (nuoE), found in Rickettsia prowazekii (strain Madrid E).